Consider the following 239-residue polypeptide: Acyl-protein thioesterase 1 (239 aa).

Active-site charge relay system residues include S124, D180, and H213.

Belongs to the AB hydrolase superfamily. AB hydrolase 2 family.

It localises to the cytoplasm. Its subcellular location is the nucleus. It carries out the reaction S-hexadecanoyl-L-cysteinyl-[protein] + H2O = L-cysteinyl-[protein] + hexadecanoate + H(+). Its function is as follows. Hydrolyzes fatty acids from S-acylated cysteine residues in proteins with a strong preference for palmitoylated G-alpha proteins over other acyl substrates. Mediates the deacylation of G-alpha proteins such as GPA1 in vivo, but has weak or no activity toward palmitoylated Ras proteins. Has weak lysophospholipase activity in vitro; however such activity may not exist in vivo. In Emericella nidulans (strain FGSC A4 / ATCC 38163 / CBS 112.46 / NRRL 194 / M139) (Aspergillus nidulans), this protein is Acyl-protein thioesterase 1.